We begin with the raw amino-acid sequence, 89 residues long: Small ribosomal subunit protein uS15 (89 aa).

The protein belongs to the universal ribosomal protein uS15 family. As to quaternary structure, part of the 30S ribosomal subunit. Forms a bridge to the 50S subunit in the 70S ribosome, contacting the 23S rRNA.

Its function is as follows. One of the primary rRNA binding proteins, it binds directly to 16S rRNA where it helps nucleate assembly of the platform of the 30S subunit by binding and bridging several RNA helices of the 16S rRNA. In terms of biological role, forms an intersubunit bridge (bridge B4) with the 23S rRNA of the 50S subunit in the ribosome. This is Small ribosomal subunit protein uS15 from Bartonella henselae (strain ATCC 49882 / DSM 28221 / CCUG 30454 / Houston 1) (Rochalimaea henselae).